The chain runs to 113 residues: uncharacterized protein (113 aa).

Belongs to the ycf68 family.

The protein resides in the plastid. The protein localises to the chloroplast. This is an uncharacterized protein from Eucalyptus globulus subsp. globulus (Tasmanian blue gum).